A 146-amino-acid polypeptide reads, in one-letter code: MKKLLLVNGPNLNRLGVREVNVYGKGTLATLETDMKHEAEKMGVELECFQSNHEGAIIDRLHEAEDIYEGIILNPGAFTHYSYAIRDAIASISIPVIEVHISNIHQRESFRHESVTAAVCAGQIVGFGFYGYKLALFALMEKLREA.

The active-site Proton acceptor is Y23. Positions 74, 80, and 87 each coordinate substrate. The active-site Proton donor is the H100. Substrate contacts are provided by residues 101–102 and R111; that span reads IS.

It belongs to the type-II 3-dehydroquinase family. As to quaternary structure, homododecamer.

It carries out the reaction 3-dehydroquinate = 3-dehydroshikimate + H2O. It participates in metabolic intermediate biosynthesis; chorismate biosynthesis; chorismate from D-erythrose 4-phosphate and phosphoenolpyruvate: step 3/7. In terms of biological role, catalyzes a trans-dehydration via an enolate intermediate. The sequence is that of 3-dehydroquinate dehydratase from Bacillus mycoides (strain KBAB4) (Bacillus weihenstephanensis).